The sequence spans 1363 residues: MGEFRKNFGRIEEILEVPNLIDIQTRSYETFLQEDVAPENRKNFGLQGAFKSVFPISDFSGKCSLEFVSYKIGAVRYDVNECIQKGMTYAAPLKIVVRLVVFDTDRLSDQKNIRDIKEQEIYFGEIPLMTEKGTFIVNGTERVIVSQLHRSPGIFFDHDKGKTLTSGKLIYSARIIPIRGSWLDLEFDSKDLLYVRIDRRRKMPVTILLKAMGYSTEDLLNYFYDVEHIFCEGENFYAAVDESLVGHKLYDDIRDINTGEILFKKGRRINKVILKRIREQRVERIKMDVEELPGRILATDILDPETGEVLFHCNEALSAAGIDVVREKGIRELSVINLGEDLSNVSIRDTLLIDRMETPGDAIIEIYRRLRPSNPPTPDTAQKFFNSLFFENESYDLSTVGRAKMNYKLRLDVSTDVTVLRKEDIMAAVKYLIDLKNGVPECSVDDIDHLGNRRVRSVGELIENQYRIGLVRMERAIKEKMSLQDIETMMPHDLVNVKPVSAVVSEFFGSSQLSQFMDQTNPLSEITHKRRLSALGPGGLTRERAGFEVRDVHPTHYGRICPVETPEGPNIGLIVSLSTYARVNEFGFIETPYRIVKEGRVLPEVKFLTAIEEENQVIAPADQPVNHDGSFKGDLISARKGGDFVNVVPSEVNMVDVSPNQLVSVAATLIPFLEHDDANRALMGSNMQRQAVPLMRPEIPLVGTGMERIVARDSGAVVVAKRSGIVESVDASRIVIKCESAEKTDRDTGVDIYTLIKYQRSNQDTCFNQKAIVNKGQRVRKGDIIADGPATDNGELALGHNVMVAFMSWGGYNYEDSILVSERIVKEDIYTSIHIEEFETMARDTKLGKEDITRDIPNVGEEALRNLDDSGIVRMGVSVKSGDILVGKITPKGETQLSSEEKLLRAIFGEKASDVRDTSLRVPPGVEGTVIDAKVFTRKGAEKDHRSQYIEDEAIAMLQKDREDEIRIITEAVKKEVGTLLQGKQSGAKIVDPKRKKIYLKKGDIITPEILSEIPLHLWKEITVADDEETERAVGQMMANLYDKIEVVEAYFNEKTEKLKASDELPPGVIKMVKVYIAIKRKLQAGDKMAGRHGNKGVLSRILPEEDMPYFKDGRPVDIVLNPLGVPSRMNVGQILETHLGWAAKGLGEKLNDMLDSYQKGNQLRDELKGIYQSREFEKFVDGATEEETYQFVRKLRRGIAVSSPVFDGATESDIRNMLKLANLPSTGQAILYDGRTGEPFDQEITVGMIYMLKLHHLVDNKIHARSIGPYSLVTQQPLGGKAQFGGQRLGEMEVWAMEAYGAAYSLQEFLTVKSDDVAGRTRIYEAIVKGENTSEPGLPESFNVLVKELQSLCLDVELIEEE.

It belongs to the RNA polymerase beta chain family. As to quaternary structure, the RNAP catalytic core consists of 2 alpha, 1 beta, 1 beta' and 1 omega subunit. When a sigma factor is associated with the core the holoenzyme is formed, which can initiate transcription.

The enzyme catalyses RNA(n) + a ribonucleoside 5'-triphosphate = RNA(n+1) + diphosphate. Its function is as follows. DNA-dependent RNA polymerase catalyzes the transcription of DNA into RNA using the four ribonucleoside triphosphates as substrates. The polypeptide is DNA-directed RNA polymerase subunit beta (Syntrophus aciditrophicus (strain SB)).